The primary structure comprises 38 residues: Large ribosomal subunit protein bL36 (38 aa).

It belongs to the bacterial ribosomal protein bL36 family.

In Alcanivorax borkumensis (strain ATCC 700651 / DSM 11573 / NCIMB 13689 / SK2), this protein is Large ribosomal subunit protein bL36.